Reading from the N-terminus, the 856-residue chain is Protein translocase subunit SecA (856 aa).

Residues Q77, 95–99 (GEGKT), and D534 contribute to the ATP site.

This sequence belongs to the SecA family. As to quaternary structure, monomer and homodimer. Part of the essential Sec protein translocation apparatus which comprises SecA, SecYEG and auxiliary proteins SecDF. Other proteins may also be involved.

Its subcellular location is the cell inner membrane. It is found in the cytoplasm. The catalysed reaction is ATP + H2O + cellular proteinSide 1 = ADP + phosphate + cellular proteinSide 2.. Part of the Sec protein translocase complex. Interacts with the SecYEG preprotein conducting channel. Has a central role in coupling the hydrolysis of ATP to the transfer of proteins into and across the cell membrane, serving as an ATP-driven molecular motor driving the stepwise translocation of polypeptide chains across the membrane. The sequence is that of Protein translocase subunit SecA from Thermosipho africanus (strain TCF52B).